We begin with the raw amino-acid sequence, 432 residues long: Cyclic 2,3-diphosphoglycerate synthetase (432 aa).

Belongs to the cyclic 2,3-diphosphoglycerate synthetase family.

It is found in the cytoplasm. It catalyses the reaction (2R)-2,3-bisphosphoglycerate + ATP + H(+) = cyclic (2R)-2,3-bisphosphoglycerate + ADP + phosphate. Its function is as follows. Catalyzes the formation of cyclic 2,3-diphosphoglycerate (cDPG) by formation of an intramolecular phosphoanhydride bond at the expense of ATP. This is Cyclic 2,3-diphosphoglycerate synthetase from Thermococcus onnurineus (strain NA1).